A 134-amino-acid chain; its full sequence is Cytochrome b5 (134 aa).

The residue at position 2 (A2) is an N-acetylalanine. K7, K10, and K19 each carry N6-acetyllysine. Positions 9–85 (VKYYTLEEIQ…SKTYIIGELH (77 aa)) constitute a Cytochrome b5 heme-binding domain. The heme site is built by H44 and H68. The helical transmembrane segment at 109-131 (WWTNWVIPAISALVVALMYRLYM) threads the bilayer.

It belongs to the cytochrome b5 family.

It localises to the endoplasmic reticulum membrane. The protein resides in the microsome membrane. In terms of biological role, cytochrome b5 is a membrane-bound hemoprotein functioning as an electron carrier for several membrane-bound oxygenases. It is also involved in several steps of the sterol biosynthesis pathway, particularly in the C-6 double bond introduction during the C-6 desaturation. The chain is Cytochrome b5 (Cyb5a) from Rattus norvegicus (Rat).